A 394-amino-acid polypeptide reads, in one-letter code: Phosphopentomutase (394 aa).

Residues Asp13, Asp286, His291, Asp327, His328, and His339 each contribute to the Mn(2+) site.

Belongs to the phosphopentomutase family. Mn(2+) is required as a cofactor.

The protein localises to the cytoplasm. The enzyme catalyses 2-deoxy-alpha-D-ribose 1-phosphate = 2-deoxy-D-ribose 5-phosphate. The catalysed reaction is alpha-D-ribose 1-phosphate = D-ribose 5-phosphate. It functions in the pathway carbohydrate degradation; 2-deoxy-D-ribose 1-phosphate degradation; D-glyceraldehyde 3-phosphate and acetaldehyde from 2-deoxy-alpha-D-ribose 1-phosphate: step 1/2. Its function is as follows. Isomerase that catalyzes the conversion of deoxy-ribose 1-phosphate (dRib-1-P) and ribose 1-phosphate (Rib-1-P) to deoxy-ribose 5-phosphate (dRib-5-P) and ribose 5-phosphate (Rib-5-P), respectively. The sequence is that of Phosphopentomutase from Bacillus thuringiensis (strain Al Hakam).